Here is a 107-residue protein sequence, read N- to C-terminus: Ig kappa chain V-VI region SAPC 10 (107 aa).

Positions 1-23 (EIVLTQSPAITAASLGQKVTITC) are framework-1. Cys23 and Cys87 form a disulfide bridge. The segment at 24–33 (SASSSVSYMH) is complementarity-determining-1. The interval 34–48 (WYQQKSGTSPKPWIY) is framework-2. Residues 49–55 (EISKLAS) are complementarity-determining-2. The tract at residues 56–87 (GVPARFSGSGSGTSYSLTISSMEAEDAAIYYC) is framework-3. The interval 88–96 (QQWNYPLIT) is complementarity-determining-3. The segment at 97–106 (FGGGTKLEIK) is framework-4.

This is Ig kappa chain V-VI region SAPC 10 from Mus musculus (Mouse).